The chain runs to 215 residues: Ribose-5-phosphate isomerase A (215 aa).

Substrate is bound by residues 26-29 (TGST), 79-82 (DGAD), and 92-95 (KGGG). Glu101 serves as the catalytic Proton acceptor. Substrate is bound at residue Lys119.

This sequence belongs to the ribose 5-phosphate isomerase family. Homodimer.

The catalysed reaction is aldehydo-D-ribose 5-phosphate = D-ribulose 5-phosphate. Its pathway is carbohydrate degradation; pentose phosphate pathway; D-ribose 5-phosphate from D-ribulose 5-phosphate (non-oxidative stage): step 1/1. In terms of biological role, catalyzes the reversible conversion of ribose-5-phosphate to ribulose 5-phosphate. The polypeptide is Ribose-5-phosphate isomerase A (Xylella fastidiosa (strain M12)).